The primary structure comprises 515 residues: Bifunctional purine biosynthesis protein PurH (515 aa).

The MGS-like domain occupies 1–145 (MTKRALISVS…KNHASVTVVV (145 aa)).

This sequence belongs to the PurH family.

The enzyme catalyses (6R)-10-formyltetrahydrofolate + 5-amino-1-(5-phospho-beta-D-ribosyl)imidazole-4-carboxamide = 5-formamido-1-(5-phospho-D-ribosyl)imidazole-4-carboxamide + (6S)-5,6,7,8-tetrahydrofolate. It carries out the reaction IMP + H2O = 5-formamido-1-(5-phospho-D-ribosyl)imidazole-4-carboxamide. Its pathway is purine metabolism; IMP biosynthesis via de novo pathway; 5-formamido-1-(5-phospho-D-ribosyl)imidazole-4-carboxamide from 5-amino-1-(5-phospho-D-ribosyl)imidazole-4-carboxamide (10-formyl THF route): step 1/1. It participates in purine metabolism; IMP biosynthesis via de novo pathway; IMP from 5-formamido-1-(5-phospho-D-ribosyl)imidazole-4-carboxamide: step 1/1. The polypeptide is Bifunctional purine biosynthesis protein PurH (Streptococcus pyogenes serotype M6 (strain ATCC BAA-946 / MGAS10394)).